The primary structure comprises 1032 residues: Kinesin heavy chain isoform 5A (1032 aa).

Ala2 carries the N-acetylalanine modification. The Kinesin motor domain maps to 9 to 327 (SIKVLCRFRP…LMFGQRAKTI (319 aa)). 86-93 (GQTSSGKT) lines the ATP pocket. The segment at 174–315 (VSGPEEILDV…PSSYNDAETK (142 aa)) is microtubule-binding. Positions 271 to 361 (EGTKSYVPYR…KTKAQKETIA (91 aa)) are necessary for interaction with ZFYVE27. Positions 331–906 (ASVNLELTAE…VDRIKEAVRY (576 aa)) form a coiled coil. Positions 353 to 1032 (TKAQKETIAK…FPLHQETAAS (680 aa)) are interaction with BICD2. Thr397 bears the Phosphothreonine mark. Residues 904-939 (VRYKSSGKRGHSAQIAKPVRPGHYPASSPTNPYGTR) are disordered. The interval 907-1032 (KSSGKRGHSA…FPLHQETAAS (126 aa)) is globular.

Belongs to the TRAFAC class myosin-kinesin ATPase superfamily. Kinesin family. Kinesin subfamily. In terms of assembly, oligomer composed of two heavy chains and two light chains. Interacts with GRIP1. Interacts with FMR1 (via C-terminus); this interaction is increased in a mGluR-dependent manner. Interacts with BORCS5. Interacts with ZFYVE27. Interacts with VAPA, VAPB, SURF4, RAB11A (GDP-bound form), RAB11B (GDP-bound form) and RTN3 in a ZFYVE27-dependent manner. Interacts with BICD2. Interacts with DTNB.

It localises to the cytoplasm. It is found in the perinuclear region. The protein resides in the cytoskeleton. The protein localises to the perikaryon. It carries out the reaction ATP + H2O + a kinesin associated with a microtubule at position (n) = ADP + phosphate a kinesin associated with a microtubule at position (n+1, toward the plus end).. Its function is as follows. Microtubule-dependent motor required for slow axonal transport of neurofilament proteins (NFH, NFM and NFL). Can induce formation of neurite-like membrane protrusions in non-neuronal cells in a ZFYVE27-dependent manner. The ZFYVE27-KIF5A complex contributes to the vesicular transport of VAPA, VAPB, SURF4, RAB11A, RAB11B and RTN3 proteins in neurons. Required for anterograde axonal transportation of MAPK8IP3/JIP3 which is essential for MAPK8IP3/JIP3 function in axon elongation. This Pongo abelii (Sumatran orangutan) protein is Kinesin heavy chain isoform 5A (KIF5A).